The chain runs to 166 residues: HTH-type transcriptional regulator PrsX (166 aa).

One can recognise an HTH marR-type domain in the interval 25–159; the sequence is EHLLMQLCIR…FEVINKKLLA (135 aa).

It is found in the cytoplasm. This Escherichia coli O6:H1 (strain CFT073 / ATCC 700928 / UPEC) protein is HTH-type transcriptional regulator PrsX (prsX).